The sequence spans 47 residues: NTFSDENPGFPCDCTSADAKRACGIQCACWPRGDTPGGGRRIIDGQQ.

Positions 32–34 match the Cell attachment site motif; it reads RGD.

Post-translationally, contains 2 disulfide bonds. Expressed in salivary glands.

The protein localises to the secreted. Functionally, potently inhibits platelet aggregation induced by ADP (IC(50)=157 nM, complete inhibition at 514 nM). Also inhibits platelet aggregation induced by collagen and by the thrombin receptor peptide SFLLRNP. Is a potent antagonist of the fibrinogen receptor glycoprotein IIb-IIIa (ITGA2B/ITGB3) and the vitronectin receptor alpha-v/beta-3 (ITGAV/ITGB3). This chain is Variabilin, found in Dermacentor variabilis (American dog tick).